A 688-amino-acid polypeptide reads, in one-letter code: DNA-directed RNA polymerase subunit beta' (688 aa).

Zn(2+) is bound by residues cysteine 69, cysteine 71, cysteine 87, and cysteine 90. 3 residues coordinate Mg(2+): aspartate 489, aspartate 491, and aspartate 493.

This sequence belongs to the RNA polymerase beta' chain family. RpoC1 subfamily. As to quaternary structure, in plastids the minimal PEP RNA polymerase catalytic core is composed of four subunits: alpha, beta, beta', and beta''. When a (nuclear-encoded) sigma factor is associated with the core the holoenzyme is formed, which can initiate transcription. Mg(2+) serves as cofactor. Zn(2+) is required as a cofactor.

Its subcellular location is the plastid. It is found in the chloroplast. It carries out the reaction RNA(n) + a ribonucleoside 5'-triphosphate = RNA(n+1) + diphosphate. DNA-dependent RNA polymerase catalyzes the transcription of DNA into RNA using the four ribonucleoside triphosphates as substrates. This Piper cenocladum (Ant piper) protein is DNA-directed RNA polymerase subunit beta'.